A 100-amino-acid chain; its full sequence is Large ribosomal subunit protein uL23 (100 aa).

This sequence belongs to the universal ribosomal protein uL23 family. In terms of assembly, part of the 50S ribosomal subunit. Contacts protein L29, and trigger factor when it is bound to the ribosome.

Functionally, one of the early assembly proteins it binds 23S rRNA. One of the proteins that surrounds the polypeptide exit tunnel on the outside of the ribosome. Forms the main docking site for trigger factor binding to the ribosome. The sequence is that of Large ribosomal subunit protein uL23 from Escherichia coli O157:H7.